A 414-amino-acid polypeptide reads, in one-letter code: Esterase FrsA (414 aa).

Belongs to the FrsA family.

It catalyses the reaction a carboxylic ester + H2O = an alcohol + a carboxylate + H(+). In terms of biological role, catalyzes the hydrolysis of esters. The chain is Esterase FrsA from Escherichia fergusonii (strain ATCC 35469 / DSM 13698 / CCUG 18766 / IAM 14443 / JCM 21226 / LMG 7866 / NBRC 102419 / NCTC 12128 / CDC 0568-73).